Here is a 193-residue protein sequence, read N- to C-terminus: dCTP deaminase (193 aa).

Residues 110 to 115 (RSSLAR), Asp128, 136 to 138 (VLE), Tyr171, Lys178, and Gln182 each bind dCTP. Glu138 (proton donor/acceptor) is an active-site residue.

The protein belongs to the dCTP deaminase family. Homotrimer.

It carries out the reaction dCTP + H2O + H(+) = dUTP + NH4(+). The protein operates within pyrimidine metabolism; dUMP biosynthesis; dUMP from dCTP (dUTP route): step 1/2. In terms of biological role, catalyzes the deamination of dCTP to dUTP. The polypeptide is dCTP deaminase (Tolumonas auensis (strain DSM 9187 / NBRC 110442 / TA 4)).